The primary structure comprises 316 residues: Transaldolase (316 aa).

Lysine 131 acts as the Schiff-base intermediate with substrate in catalysis.

This sequence belongs to the transaldolase family. Type 1 subfamily. As to quaternary structure, homodimer.

The protein resides in the cytoplasm. It catalyses the reaction D-sedoheptulose 7-phosphate + D-glyceraldehyde 3-phosphate = D-erythrose 4-phosphate + beta-D-fructose 6-phosphate. It functions in the pathway carbohydrate degradation; pentose phosphate pathway; D-glyceraldehyde 3-phosphate and beta-D-fructose 6-phosphate from D-ribose 5-phosphate and D-xylulose 5-phosphate (non-oxidative stage): step 2/3. In terms of biological role, transaldolase is important for the balance of metabolites in the pentose-phosphate pathway. The protein is Transaldolase of Buchnera aphidicola subsp. Acyrthosiphon pisum (strain 5A).